The following is a 102-amino-acid chain: Large ribosomal subunit protein bL21 (102 aa).

It belongs to the bacterial ribosomal protein bL21 family. Part of the 50S ribosomal subunit. Contacts protein L20.

This protein binds to 23S rRNA in the presence of protein L20. In Macrococcus caseolyticus (strain JCSC5402) (Macrococcoides caseolyticum), this protein is Large ribosomal subunit protein bL21.